We begin with the raw amino-acid sequence, 389 residues long: Chalcone synthase 3 (389 aa).

Cys164 is a catalytic residue.

The protein belongs to the thiolase-like superfamily. Chalcone/stilbene synthases family.

It catalyses the reaction (E)-4-coumaroyl-CoA + 3 malonyl-CoA + 3 H(+) = 2',4,4',6'-tetrahydroxychalcone + 3 CO2 + 4 CoA. Its pathway is secondary metabolite biosynthesis; flavonoid biosynthesis. In terms of biological role, the primary product of this enzyme is 4,2',4',6'-tetrahydroxychalcone (also termed naringenin-chalcone or chalcone) which can under specific conditions spontaneously isomerize into naringenin. In Camellia sinensis (Tea plant), this protein is Chalcone synthase 3 (CHS3).